The chain runs to 173 residues: Alpha-crystallin A chain (173 aa).

The residue at position 1 (Met-1) is an N-acetylmethionine. The interval 1-63 (MDVTIQHPWF…RTVLDSGISE (63 aa)) is required for complex formation with BFSP1 and BFSP2. Gln-6 is modified (deamidated glutamine; partial). At Ser-45 the chain carries Phosphoserine. Position 50 is a deamidated glutamine; partial (Gln-50). In terms of domain architecture, sHSP spans 52–162 (LFRTVLDSGI…GHSERAIPVS (111 aa)). At Lys-99 the chain carries N6-acetyllysine. Residue His-100 participates in Zn(2+) binding. Asn-101 is subject to Deamidated asparagine; partial. Positions 102 and 107 each coordinate Zn(2+). Ser-122 carries the phosphoserine modification. Asn-123 carries the deamidated asparagine; partial modification. Cys-131 and Cys-142 are joined by a disulfide. Positions 146–173 (VQSSMDDGHSERAIPVSREEKPSSVPSS) are disordered. Deamidated glutamine; partial is present on Gln-147. Basic and acidic residues predominate over residues 151–167 (DDGHSERAIPVSREEKP). His-154 is a binding site for Zn(2+). O-linked (GlcNAc) serine glycosylation occurs at Ser-162.

Belongs to the small heat shock protein (HSP20) family. As to quaternary structure, heteromer composed of three CRYAA and one CRYAB subunits. Inter-subunit bridging via zinc ions enhances stability, which is crucial as there is no protein turn over in the lens. Can also form homodimers and homotetramers (dimers of dimers) which serve as the building blocks of homooligomers. Within homooligomers, the zinc-binding motif is created from residues of 3 different molecules. His-100 and Glu-102 from one molecule are ligands of the zinc ion, and His-107 and His-154 residues from additional molecules complete the site with tetrahedral coordination geometry. Part of a complex required for lens intermediate filament formation composed of BFSP1, BFSP2 and CRYAA. In terms of processing, undergoes age-dependent proteolytical cleavage at the C-terminus.

It is found in the cytoplasm. The protein localises to the nucleus. Its function is as follows. Contributes to the transparency and refractive index of the lens. In its oxidized form (absence of intramolecular disulfide bond), acts as a chaperone, preventing aggregation of various proteins under a wide range of stress conditions. Required for the correct formation of lens intermediate filaments as part of a complex composed of BFSP1, BFSP2 and CRYAA. The protein is Alpha-crystallin A chain (CRYAA) of Orycteropus afer (Aardvark).